Reading from the N-terminus, the 542-residue chain is Glucose-6-phosphate isomerase 2 (542 aa).

E353 acts as the Proton donor in catalysis. Catalysis depends on residues H384 and K505.

This sequence belongs to the GPI family.

The protein resides in the cytoplasm. It catalyses the reaction alpha-D-glucose 6-phosphate = beta-D-fructose 6-phosphate. It participates in carbohydrate biosynthesis; gluconeogenesis. It functions in the pathway carbohydrate degradation; glycolysis; D-glyceraldehyde 3-phosphate and glycerone phosphate from D-glucose: step 2/4. In terms of biological role, catalyzes the reversible isomerization of glucose-6-phosphate to fructose-6-phosphate. The polypeptide is Glucose-6-phosphate isomerase 2 (Cupriavidus pinatubonensis (strain JMP 134 / LMG 1197) (Cupriavidus necator (strain JMP 134))).